The primary structure comprises 240 residues: Cysteine-rich secretory protein (240 aa).

The N-terminal stretch at 1-19 (MIAFIVLPILAAVLQQSSG) is a signal peptide. The 129-residue stretch at 38–166 (VDLHNSLRRS…EYSYFYVCQY (129 aa)) folds into the SCP domain. 8 disulfides stabilise this stretch: Cys75/Cys153, Cys92/Cys167, Cys148/Cys164, Cys186/Cys193, Cys189/Cys198, Cys202/Cys235, Cys211/Cys229, and Cys220/Cys233. Residues 202–235 (CTKEDKYSNCKSLVQQAGCQDKQMQSDCSAICFC) enclose the ShKT domain.

It belongs to the CRISP family. As to expression, expressed by the venom gland.

The protein resides in the secreted. Functionally, weakly blocks contraction of smooth muscle elicited by high potassium-induced depolarization, but does not block caffeine-stimulated contraction. May target voltage-gated calcium channels on smooth muscle. This is Cysteine-rich secretory protein from Crotalus adamanteus (Eastern diamondback rattlesnake).